The primary structure comprises 357 residues: MSLTRLLIKDFRNIENADLALSPGFNFLVGANGSGKTSVLEAIYTLGHGRAFRSLQPGRVIRHEQEAFVLHGRLQSEERETSIGLTKDKQGDSKVRIDGTDGHKIAELAHLMPMQLITPEGFTLLNGGPKYRRAFLDWGCFHNEAGFFTAWSNLKRLLKQRNAALRQVSRYEQLRPWDKELIPLAEQISTWRAEYSSAIAQDMADTCQQFLPEFSLTFSFQRGWEKETDYADVLERSFERDRMLTYTAHGPHKADFRIRADGAPVEDTLSRGQLKLLMCALRLAQGEFLTRESGRRCLYLIDDFASELDDARRGLLASRLKATQSQVFVSAISAEHVIDMSDENSKMFTVEKGKITD.

ATP is bound at residue 30-37 (GANGSGKT).

The protein belongs to the RecF family.

The protein resides in the cytoplasm. In terms of biological role, the RecF protein is involved in DNA metabolism; it is required for DNA replication and normal SOS inducibility. RecF binds preferentially to single-stranded, linear DNA. It also seems to bind ATP. The chain is DNA replication and repair protein RecF from Salmonella heidelberg (strain SL476).